Consider the following 120-residue polypeptide: Phosphoribosyl-ATP pyrophosphatase (120 aa).

A disordered region spans residues 97–120 (REGTSGLVEKASRPAKKDSGTADS). The span at 106 to 120 (KASRPAKKDSGTADS) shows a compositional bias: basic and acidic residues.

Belongs to the PRA-PH family.

The protein resides in the cytoplasm. The catalysed reaction is 1-(5-phospho-beta-D-ribosyl)-ATP + H2O = 1-(5-phospho-beta-D-ribosyl)-5'-AMP + diphosphate + H(+). The protein operates within amino-acid biosynthesis; L-histidine biosynthesis; L-histidine from 5-phospho-alpha-D-ribose 1-diphosphate: step 2/9. The polypeptide is Phosphoribosyl-ATP pyrophosphatase (Rhodopirellula baltica (strain DSM 10527 / NCIMB 13988 / SH1)).